We begin with the raw amino-acid sequence, 149 residues long: Protein SprT-like (149 aa).

Residues 5 to 143 enclose the SprT-like domain; sequence DYVKQVSLED…CGLCRGKLLL (139 aa). Residue His-64 coordinates Zn(2+). Glu-65 is an active-site residue. Residue His-68 coordinates Zn(2+).

The protein belongs to the SprT family. Zn(2+) is required as a cofactor.

It is found in the cytoplasm. In Streptococcus pneumoniae (strain Hungary19A-6), this protein is Protein SprT-like.